A 218-amino-acid chain; its full sequence is Uracil-DNA glycosylase (218 aa).

Asp68 functions as the Proton acceptor in the catalytic mechanism.

It belongs to the uracil-DNA glycosylase (UDG) superfamily. UNG family. Homodimer. Interacts with protein OPG148. Component of the Uracil-DNA glycosylase(UDG)-OPG148-polymerase complex; OPG148 and UDG form a heterodimeric processivity factor that associates with OPG71 to form the processive polymerase holoenzyme.

It catalyses the reaction Hydrolyzes single-stranded DNA or mismatched double-stranded DNA and polynucleotides, releasing free uracil.. In terms of biological role, plays an essential role in viral replication as a component of the DNA polymerase processivity factor. Excises uracil residues from the DNA which can arise as a result of misincorporation of dUMP residues by DNA polymerase or due to deamination of cytosine. This chain is Uracil-DNA glycosylase (OPG116), found in Variola virus.